The chain runs to 195 residues: CASP-like protein 1B2 (195 aa).

The Cytoplasmic segment spans residues 1 to 25 (MDLEKGKKPSEQAAACRIMQVKDKL). The helical transmembrane segment at 26-46 (ITLQPVVRACVFLATAVAAVI) threads the bilayer. The Extracellular segment spans residues 47-78 (MGLNKQSYTTVVAIVGTRPVTQTFTAKFKDTP). A helical membrane pass occupies residues 79 to 99 (AFVFFVIANAIASGYNLMVLV). Residues 100–114 (TRRILQRRAQSLSVH) are Cytoplasmic-facing. A helical transmembrane segment spans residues 115–135 (LLDMVILTLLATGSATAASMA). Over 136-160 (QLGKNGNLHARWNPICDKFGSFCNH) the chain is Extracellular. A helical transmembrane segment spans residues 161 to 181 (GGIALVSSFIGVALMLALNLL). Over 182 to 195 (SAAANSPRSNVTGQ) the chain is Cytoplasmic.

Belongs to the Casparian strip membrane proteins (CASP) family. Homodimer and heterodimers.

The protein resides in the cell membrane. This chain is CASP-like protein 1B2, found in Oryza sativa subsp. indica (Rice).